We begin with the raw amino-acid sequence, 188 residues long: Protein salivary glands marred (188 aa).

It belongs to the TNFAIP8 family. Interacts with the Ste20-like MAP kinase msn.

The protein resides in the cytoplasm. It localises to the cytoskeleton. In terms of biological role, important for modulating JNK signaling, cytoskeletal remodeling and autophagy in larval salivary glands. During salivary gland development, involved in the positive regulation of the JNK signaling pathway, acting downstream of the TNF ligand egr and upstream of bsk. In Drosophila melanogaster (Fruit fly), this protein is Protein salivary glands marred.